We begin with the raw amino-acid sequence, 111 residues long: Protein YibV (111 aa).

The sequence is that of Protein YibV (yibV) from Escherichia coli O157:H7.